Consider the following 682-residue polypeptide: Potassium-transporting ATPase ATP-binding subunit (682 aa).

Transmembrane regions (helical) follow at residues 44-64, 66-86, 233-253, and 257-277; these read VMAV…SGHG, AGFG…GNFA, LTFL…GVTL, and LLIA…LPAI. Aspartate 310 functions as the 4-aspartylphosphate intermediate in the catalytic mechanism. ATP is bound by residues aspartate 347, glutamate 351, 377–384, and lysine 395; that span reads FTAQTRMS. Mg(2+)-binding residues include aspartate 518 and aspartate 522. A run of 3 helical transmembrane segments spans residues 588-608, 616-636, and 658-678; these read FAIL…LNVM, AVLA…PLAL, and GLGG…ALVA.

This sequence belongs to the cation transport ATPase (P-type) (TC 3.A.3) family. Type IA subfamily. The system is composed of three essential subunits: KdpA, KdpB and KdpC.

Its subcellular location is the cell inner membrane. It catalyses the reaction K(+)(out) + ATP + H2O = K(+)(in) + ADP + phosphate + H(+). In terms of biological role, part of the high-affinity ATP-driven potassium transport (or Kdp) system, which catalyzes the hydrolysis of ATP coupled with the electrogenic transport of potassium into the cytoplasm. This subunit is responsible for energy coupling to the transport system and for the release of the potassium ions to the cytoplasm. This chain is Potassium-transporting ATPase ATP-binding subunit, found in Xanthomonas campestris pv. campestris (strain ATCC 33913 / DSM 3586 / NCPPB 528 / LMG 568 / P 25).